We begin with the raw amino-acid sequence, 421 residues long: Zinc finger protein 57 (421 aa).

Residues Val15–Pro88 enclose the KRAB domain. A C2H2-type 1; degenerate zinc finger spans residues Phe90–Arg113. 2 C2H2-type zinc fingers span residues Phe140–His162 and Arg168–His190. Residues Gln191–Gln221 form a disordered region. A compositionally biased stretch (low complexity) spans Ala195–Gln207. Residues Ile264 to His286 form a C2H2-type 4 zinc finger. The C2H2-type 5; degenerate zinc-finger motif lies at Tyr313–Leu332. Positions Gly371–Asp421 are disordered.

This sequence belongs to the krueppel C2H2-type zinc-finger protein family. As to expression, expressed in oocytes and in a subset of adult tissues. Expressed at high levels in testis, and at low levels in cerebellum. Present in sciatic nerve and spinal cord (at protein level).

The protein localises to the nucleus. Its function is as follows. Transcription regulator required to maintain maternal and paternal gene imprinting, a process by which gene expression is restricted in a parent of origin-specific manner by epigenetic modification of genomic DNA and chromatin, including DNA methylation. Acts by controlling DNA methylation during the earliest multicellular stages of development at multiple imprinting control regions (ICRs). Acts together with ZNF445, but ZFP57 plays the predominant role in imprinting maintenance. In contrast, in humans, ZNF445 seems to be the major factor early embryonic imprinting maintenance. Required for the establishment of maternal methylation imprints at SNRPN locus. Acts as a transcriptional repressor in Schwann cells. Binds to a 5'-TGCCGC-3' consensus sequence and recognizes the methylated CpG within this element. The sequence is that of Zinc finger protein 57 (Zfp57) from Mus musculus (Mouse).